Here is a 130-residue protein sequence, read N- to C-terminus: DNA-directed RNA polymerase subunit omega (130 aa).

The disordered stretch occupies residues 109-130 (EEELLKGLEGLAPPEEQPEEDE).

Belongs to the RNA polymerase subunit omega family. In terms of assembly, the RNAP catalytic core consists of 2 alpha, 1 beta, 1 beta' and 1 omega subunit. When a sigma factor is associated with the core the holoenzyme is formed, which can initiate transcription.

It catalyses the reaction RNA(n) + a ribonucleoside 5'-triphosphate = RNA(n+1) + diphosphate. In terms of biological role, promotes RNA polymerase assembly. Latches the N- and C-terminal regions of the beta' subunit thereby facilitating its interaction with the beta and alpha subunits. This chain is DNA-directed RNA polymerase subunit omega, found in Rhodopseudomonas palustris (strain BisA53).